The primary structure comprises 699 residues: Elongation factor G (699 aa).

A tr-type G domain is found at Glu-8–Ile-286. Residues Ala-17–Thr-24, Asp-84–His-88, and Asn-138–Asp-141 each bind GTP.

The protein belongs to the TRAFAC class translation factor GTPase superfamily. Classic translation factor GTPase family. EF-G/EF-2 subfamily.

The protein localises to the cytoplasm. Its function is as follows. Catalyzes the GTP-dependent ribosomal translocation step during translation elongation. During this step, the ribosome changes from the pre-translocational (PRE) to the post-translocational (POST) state as the newly formed A-site-bound peptidyl-tRNA and P-site-bound deacylated tRNA move to the P and E sites, respectively. Catalyzes the coordinated movement of the two tRNA molecules, the mRNA and conformational changes in the ribosome. The chain is Elongation factor G (fusA) from Aquifex pyrophilus.